Consider the following 340-residue polypeptide: UDP-N-acetylenolpyruvoylglucosamine reductase (340 aa).

The 172-residue stretch at 14–185 folds into the FAD-binding PCMH-type domain; sequence HVEATARWLL…VAVEFNLPLL (172 aa). Arginine 162 is a catalytic residue. The Proton donor role is filled by serine 235. Glutamate 332 is an active-site residue.

This sequence belongs to the MurB family. It depends on FAD as a cofactor.

Its subcellular location is the cytoplasm. The catalysed reaction is UDP-N-acetyl-alpha-D-muramate + NADP(+) = UDP-N-acetyl-3-O-(1-carboxyvinyl)-alpha-D-glucosamine + NADPH + H(+). The protein operates within cell wall biogenesis; peptidoglycan biosynthesis. Cell wall formation. The chain is UDP-N-acetylenolpyruvoylglucosamine reductase from Xanthomonas oryzae pv. oryzae (strain KACC10331 / KXO85).